The following is a 301-amino-acid chain: Ribosomal RNA small subunit methyltransferase H (301 aa).

S-adenosyl-L-methionine-binding positions include 35 to 37, D55, F84, D105, and Q112; that span reads GGH.

The protein belongs to the methyltransferase superfamily. RsmH family.

The protein localises to the cytoplasm. The catalysed reaction is cytidine(1402) in 16S rRNA + S-adenosyl-L-methionine = N(4)-methylcytidine(1402) in 16S rRNA + S-adenosyl-L-homocysteine + H(+). In terms of biological role, specifically methylates the N4 position of cytidine in position 1402 (C1402) of 16S rRNA. The chain is Ribosomal RNA small subunit methyltransferase H from Chloroflexus aggregans (strain MD-66 / DSM 9485).